Reading from the N-terminus, the 142-residue chain is Glia maturation factor gamma (142 aa).

At Ser-2 the chain carries N-acetylserine. The ADF-H domain maps to 4–139; the sequence is SLVVCEVDPE…TETWLKEKLA (136 aa).

Belongs to the actin-binding proteins ADF family. GMF subfamily.

The polypeptide is Glia maturation factor gamma (Gmfg) (Mus musculus (Mouse)).